The following is a 492-amino-acid chain: MGLLDPSQKEVLKFAVSCRILTLVLQALFNIIIPDHHADAFSPPRLAPSGSVDQLVEALLGGLSRWDAEHFLFIAEHGYLYEHNFAFFPGFPLALLMGTELLRPLQGLLSERSCLLVSVALLNSLFSVLAAVALHDLGCLVLHCPRQAFCAALLFCLSPANVFLAAGYSEALFAFLTFSAMGQLERGRGWASGLLFALAAGVRSNGLVSVGFLLHSQCRGFCSSLVVLDPLKGLVKLMASLCLSVLTVSLPFALFQYYAYTQFCFPGSAHAIPEPLLRLASDRGYRLAGDYEPPWCSRAPPLIYSYIQDVYWNVGLLRYYELRQVPNFLLATPVTVLVVWATWTYVTAHPWLCLTLGLQRTKDRESLEKPHPGFLSAKVFVYLVHAAALLAFGGLCMHVQVLTRLLGSSTPITYWFPAYLLQDREPLLRCVDTAPQKLLENSPPGQKAPRNCVMKLLYNWKTCSPVTKCILVYFLTYWLLGLIMHCNFLPWT.

At 1–13 (MGLLDPSQKEVLK) the chain is on the cytoplasmic side. Residues 14–34 (FAVSCRILTLVLQALFNIIIP) form a helical membrane-spanning segment. Topologically, residues 35–77 (DHHADAFSPPRLAPSGSVDQLVEALLGGLSRWDAEHFLFIAEH) are lumenal. Residues 78-98 (GYLYEHNFAFFPGFPLALLMG) traverse the membrane as a helical segment. Residues 99-113 (TELLRPLQGLLSERS) lie on the Cytoplasmic side of the membrane. The chain crosses the membrane as a helical span at residues 114 to 134 (CLLVSVALLNSLFSVLAAVAL). The Lumenal segment spans residues 135–136 (HD). A helical transmembrane segment spans residues 137 to 157 (LGCLVLHCPRQAFCAALLFCL). The Cytoplasmic segment spans residues 158–161 (SPAN). Residues 162-182 (VFLAAGYSEALFAFLTFSAMG) traverse the membrane as a helical segment. Topologically, residues 183 to 192 (QLERGRGWAS) are lumenal. The helical transmembrane segment at 193–213 (GLLFALAAGVRSNGLVSVGFL) threads the bilayer. Topologically, residues 214 to 234 (LHSQCRGFCSSLVVLDPLKGL) are cytoplasmic. Residues 235–255 (VKLMASLCLSVLTVSLPFALF) form a helical membrane-spanning segment. Topologically, residues 256 to 327 (QYYAYTQFCF…RYYELRQVPN (72 aa)) are lumenal. Residues 328 to 348 (FLLATPVTVLVVWATWTYVTA) form a helical membrane-spanning segment. Over 349–378 (HPWLCLTLGLQRTKDRESLEKPHPGFLSAK) the chain is Cytoplasmic. The chain crosses the membrane as a helical span at residues 379–399 (VFVYLVHAAALLAFGGLCMHV). The Lumenal segment spans residues 400–468 (QVLTRLLGSS…NWKTCSPVTK (69 aa)). A helical transmembrane segment spans residues 469-489 (CILVYFLTYWLLGLIMHCNFL). Over 490-492 (PWT) the chain is Cytoplasmic.

It belongs to the PIGV family. In terms of processing, not N-glycosylated.

The protein localises to the endoplasmic reticulum membrane. It participates in glycolipid biosynthesis; glycosylphosphatidylinositol-anchor biosynthesis. Alpha-1,6-mannosyltransferase that catalyzes the transfer of the second mannose, via an alpha-1,6 bond, from a dolichol-phosphate-mannose (Dol-P-Man) to the alpha-D-Man-(1-&gt;4)-alpha-D-GlcN-(1-&gt;6)-(1-radyl,2-acyl-sn-glycero-3-phospho)-2-acyl-inositol (also termed H2) intermediate to generate an alpha-D-Man-(1-&gt;6)-alpha-D-Man-(1-&gt;4)-alpha-D-GlcN-(1-&gt;6)-(1-radyl,2-acyl-sn-glycero-3-phospho)-2-acyl-inositol (also termed H3) and participates in the seventh step of the glycosylphosphatidylinositol-anchor biosynthesis. Also transfers the second mannose on a 2-PEtn-alpha-D-Man-(1-&gt;4)-alpha-D-GlcN-(1-&gt;6)-(1-radyl,2-acyl-sn-glycero-3-phospho)-2-acyl-inositol (also termed H5). The protein is GPI alpha-1,6-mannosyltransferase 2 of Rattus norvegicus (Rat).